We begin with the raw amino-acid sequence, 939 residues long: AP-2 complex subunit alpha (939 aa).

The span at 623 to 633 (RVPENEIRESK) shows a compositional bias: basic and acidic residues. The disordered stretch occupies residues 623-660 (RVPENEIRESKSPAPTSGPGSVLQNNVHVNNSHSKLNN). A compositionally biased stretch (polar residues) spans 635-660 (PAPTSGPGSVLQNNVHVNNSHSKLNN).

Belongs to the adapter complexes large subunit family. As to quaternary structure, adaptor protein complex 2 (AP-2) is a heterotetramer composed of two large adaptins (alpha-type and beta-type subunits), a medium adaptin (mu-type subunit AP50) and a small adaptin (sigma-type subunit AP17).

It is found in the cell membrane. The protein localises to the membrane. The protein resides in the coated pit. Functionally, adaptins are components of the adapter complexes which link clathrin to receptors in coated vesicles. Clathrin-associated protein complexes are believed to interact with the cytoplasmic tails of membrane proteins, leading to their selection and concentration. Alpha adaptin is a subunit of the plasma membrane adapter. This Drosophila pseudoobscura pseudoobscura (Fruit fly) protein is AP-2 complex subunit alpha.